Consider the following 427-residue polypeptide: Trigger factor (427 aa).

Residues 163–248 form the PPIase FKBP-type domain; sequence GDTVVIDFVG…IHEVKAKEVP (86 aa).

This sequence belongs to the FKBP-type PPIase family. Tig subfamily.

It localises to the cytoplasm. It carries out the reaction [protein]-peptidylproline (omega=180) = [protein]-peptidylproline (omega=0). Functionally, involved in protein export. Acts as a chaperone by maintaining the newly synthesized protein in an open conformation. Functions as a peptidyl-prolyl cis-trans isomerase. This chain is Trigger factor, found in Streptococcus pneumoniae (strain ATCC 700669 / Spain 23F-1).